Reading from the N-terminus, the 338-residue chain is CRISPR-associated endonuclease Cas1 (338 aa).

3 residues coordinate Mn(2+): E155, H220, and E235.

The protein belongs to the CRISPR-associated endonuclease Cas1 family. In terms of assembly, homodimer, forms a heterotetramer with a Cas2 homodimer. Requires Mg(2+) as cofactor. Mn(2+) is required as a cofactor.

Its function is as follows. CRISPR (clustered regularly interspaced short palindromic repeat), is an adaptive immune system that provides protection against mobile genetic elements (viruses, transposable elements and conjugative plasmids). CRISPR clusters contain spacers, sequences complementary to antecedent mobile elements, and target invading nucleic acids. CRISPR clusters are transcribed and processed into CRISPR RNA (crRNA). Acts as a dsDNA endonuclease. Involved in the integration of spacer DNA into the CRISPR cassette. The type III-A Csm effector complex binds crRNA and acts as a crRNA-guided RNase, DNase and cyclic oligoadenylate synthase; binding of target RNA cognate to the crRNA is required for all activities. This Mycobacterium tuberculosis (strain CDC 1551 / Oshkosh) protein is CRISPR-associated endonuclease Cas1.